A 112-amino-acid chain; its full sequence is DNA-directed RNA polymerases I and III subunit RPAC2 (112 aa).

The protein belongs to the archaeal Rpo11/eukaryotic RPB11/RPC19 RNA polymerase subunit family. Component of the RNA polymerase I (Pol I) and RNA polymerase III (Pol III) complexes consisting of at least 13 and 17 subunits, respectively.

It is found in the nucleus. Its function is as follows. DNA-dependent RNA polymerase catalyzes the transcription of DNA into RNA using the four ribonucleoside triphosphates as substrates. Common core component of RNA polymerases I and III which synthesize ribosomal RNA precursors and small RNAs, such as 5S rRNA and tRNAs, respectively. The sequence is that of DNA-directed RNA polymerases I and III subunit RPAC2 (polr1d) from Danio rerio (Zebrafish).